A 260-amino-acid chain; its full sequence is Thiazole synthase (260 aa).

Catalysis depends on Lys-96, which acts as the Schiff-base intermediate with DXP. 1-deoxy-D-xylulose 5-phosphate is bound by residues Gly-157, 183-184 (AG), and 205-206 (AS).

Belongs to the ThiG family. Homotetramer. Forms heterodimers with either ThiH or ThiS.

The protein localises to the cytoplasm. The enzyme catalyses [ThiS sulfur-carrier protein]-C-terminal-Gly-aminoethanethioate + 2-iminoacetate + 1-deoxy-D-xylulose 5-phosphate = [ThiS sulfur-carrier protein]-C-terminal Gly-Gly + 2-[(2R,5Z)-2-carboxy-4-methylthiazol-5(2H)-ylidene]ethyl phosphate + 2 H2O + H(+). The protein operates within cofactor biosynthesis; thiamine diphosphate biosynthesis. Functionally, catalyzes the rearrangement of 1-deoxy-D-xylulose 5-phosphate (DXP) to produce the thiazole phosphate moiety of thiamine. Sulfur is provided by the thiocarboxylate moiety of the carrier protein ThiS. In vitro, sulfur can be provided by H(2)S. In Corynebacterium glutamicum (strain R), this protein is Thiazole synthase.